The chain runs to 578 residues: Phosphoenolpyruvate-protein phosphotransferase (578 aa).

Histidine 195 acts as the Tele-phosphohistidine intermediate in catalysis. Positions 302 and 338 each coordinate phosphoenolpyruvate. Mg(2+)-binding residues include glutamate 437 and aspartate 461. Phosphoenolpyruvate contacts are provided by residues 460–461 (ND) and arginine 471. Cysteine 508 acts as the Proton donor in catalysis.

It belongs to the PEP-utilizing enzyme family. Homodimer. It depends on Mg(2+) as a cofactor.

The protein localises to the cytoplasm. The catalysed reaction is L-histidyl-[protein] + phosphoenolpyruvate = N(pros)-phospho-L-histidyl-[protein] + pyruvate. Its function is as follows. General (non sugar-specific) component of the phosphoenolpyruvate-dependent sugar phosphotransferase system (sugar PTS). This major carbohydrate active-transport system catalyzes the phosphorylation of incoming sugar substrates concomitantly with their translocation across the cell membrane. Enzyme I transfers the phosphoryl group from phosphoenolpyruvate (PEP) to the phosphoryl carrier protein (HPr). In Geobacillus stearothermophilus (Bacillus stearothermophilus), this protein is Phosphoenolpyruvate-protein phosphotransferase (ptsI).